Here is a 342-residue protein sequence, read N- to C-terminus: tRNA dimethylallyltransferase (342 aa).

A compositionally biased stretch (polar residues) spans 1–13 (MNDTTAKTLNCSP). The disordered stretch occupies residues 1 to 21 (MNDTTAKTLNCSPASRDGFPE). 40–47 (GPTGVGKT) serves as a coordination point for ATP. 42 to 47 (TGVGKT) provides a ligand contact to substrate. Interaction with substrate tRNA regions lie at residues 65–68 (DSMQ) and 189–193 (QRILR).

It belongs to the IPP transferase family. In terms of assembly, monomer. Mg(2+) is required as a cofactor.

It carries out the reaction adenosine(37) in tRNA + dimethylallyl diphosphate = N(6)-dimethylallyladenosine(37) in tRNA + diphosphate. Functionally, catalyzes the transfer of a dimethylallyl group onto the adenine at position 37 in tRNAs that read codons beginning with uridine, leading to the formation of N6-(dimethylallyl)adenosine (i(6)A). This is tRNA dimethylallyltransferase from Syntrophobacter fumaroxidans (strain DSM 10017 / MPOB).